Reading from the N-terminus, the 347-residue chain is DNA-directed RNA polymerase subunit alpha (347 aa).

Positions 1–243 (MLFREGTRLI…DQISVFINFD (243 aa)) are alpha N-terminal domain (alpha-NTD). Residues 255–347 (SGSSDLNDNL…EWKRKQHHEA (93 aa)) are alpha C-terminal domain (alpha-CTD).

It belongs to the RNA polymerase alpha chain family. Homodimer. The RNAP catalytic core consists of 2 alpha, 1 beta, 1 beta' and 1 omega subunit. When a sigma factor is associated with the core the holoenzyme is formed, which can initiate transcription.

It carries out the reaction RNA(n) + a ribonucleoside 5'-triphosphate = RNA(n+1) + diphosphate. In terms of biological role, DNA-dependent RNA polymerase catalyzes the transcription of DNA into RNA using the four ribonucleoside triphosphates as substrates. The chain is DNA-directed RNA polymerase subunit alpha from Lawsonia intracellularis (strain PHE/MN1-00).